The primary structure comprises 163 residues: SsrA-binding protein (163 aa).

The protein belongs to the SmpB family.

It localises to the cytoplasm. Its function is as follows. Required for rescue of stalled ribosomes mediated by trans-translation. Binds to transfer-messenger RNA (tmRNA), required for stable association of tmRNA with ribosomes. tmRNA and SmpB together mimic tRNA shape, replacing the anticodon stem-loop with SmpB. tmRNA is encoded by the ssrA gene; the 2 termini fold to resemble tRNA(Ala) and it encodes a 'tag peptide', a short internal open reading frame. During trans-translation Ala-aminoacylated tmRNA acts like a tRNA, entering the A-site of stalled ribosomes, displacing the stalled mRNA. The ribosome then switches to translate the ORF on the tmRNA; the nascent peptide is terminated with the 'tag peptide' encoded by the tmRNA and targeted for degradation. The ribosome is freed to recommence translation, which seems to be the essential function of trans-translation. The chain is SsrA-binding protein from Shewanella sp. (strain ANA-3).